Consider the following 311-residue polypeptide: 4-hydroxy-3-methylbut-2-enyl diphosphate reductase (311 aa).

Position 14 (Cys14) interacts with [4Fe-4S] cluster. The (2E)-4-hydroxy-3-methylbut-2-enyl diphosphate site is built by His43 and His76. Positions 43 and 76 each coordinate dimethylallyl diphosphate. Residues His43 and His76 each coordinate isopentenyl diphosphate. Residue Cys98 coordinates [4Fe-4S] cluster. Residue His126 participates in (2E)-4-hydroxy-3-methylbut-2-enyl diphosphate binding. His126 is a binding site for dimethylallyl diphosphate. Residue His126 coordinates isopentenyl diphosphate. The active-site Proton donor is Glu128. Residue Thr166 participates in (2E)-4-hydroxy-3-methylbut-2-enyl diphosphate binding. Cys196 serves as a coordination point for [4Fe-4S] cluster. (2E)-4-hydroxy-3-methylbut-2-enyl diphosphate is bound by residues Ser224, Ser225, Asn226, and Ser268. Dimethylallyl diphosphate-binding residues include Ser224, Ser225, Asn226, and Ser268. Isopentenyl diphosphate is bound by residues Ser224, Ser225, Asn226, and Ser268.

Belongs to the IspH family. [4Fe-4S] cluster serves as cofactor.

It catalyses the reaction isopentenyl diphosphate + 2 oxidized [2Fe-2S]-[ferredoxin] + H2O = (2E)-4-hydroxy-3-methylbut-2-enyl diphosphate + 2 reduced [2Fe-2S]-[ferredoxin] + 2 H(+). The enzyme catalyses dimethylallyl diphosphate + 2 oxidized [2Fe-2S]-[ferredoxin] + H2O = (2E)-4-hydroxy-3-methylbut-2-enyl diphosphate + 2 reduced [2Fe-2S]-[ferredoxin] + 2 H(+). Its pathway is isoprenoid biosynthesis; dimethylallyl diphosphate biosynthesis; dimethylallyl diphosphate from (2E)-4-hydroxy-3-methylbutenyl diphosphate: step 1/1. It participates in isoprenoid biosynthesis; isopentenyl diphosphate biosynthesis via DXP pathway; isopentenyl diphosphate from 1-deoxy-D-xylulose 5-phosphate: step 6/6. Catalyzes the conversion of 1-hydroxy-2-methyl-2-(E)-butenyl 4-diphosphate (HMBPP) into a mixture of isopentenyl diphosphate (IPP) and dimethylallyl diphosphate (DMAPP). Acts in the terminal step of the DOXP/MEP pathway for isoprenoid precursor biosynthesis. The polypeptide is 4-hydroxy-3-methylbut-2-enyl diphosphate reductase (Chromobacterium violaceum (strain ATCC 12472 / DSM 30191 / JCM 1249 / CCUG 213 / NBRC 12614 / NCIMB 9131 / NCTC 9757 / MK)).